The chain runs to 314 residues: MAFLEDGNHTAVTGFILLGLTDDPVLRVVLFVIILCIYLVTVSGNLSTILLIRVSSQLHHPMYFFLSHLASADIGYSSSVTPNMLVNFLVERNTISYLGCGIQLGSAVFFGTVECFLLAAMAYDRFIAICSPLLYSNKMSTQVCVQLLVGSYIGGFLNASSFTLSFFSLVFCGPNRVNHFFCDFAPLVKLSCSDVSVPAVVPSFTAGSIIIVTIFVIAVSYIYILITILKMRSTEGRQKAFSTCTSHLTAVTLFYGTITFIYVMPKSSYSTDQNKVVSVFYMVVVPMLNPLIYSLRNKEIKGALKRQLAKNTFS.

Over Met-1–Val-28 the chain is Extracellular. N-linked (GlcNAc...) asparagine glycosylation occurs at Asn-8. A helical membrane pass occupies residues Val-29–Ile-49. Topologically, residues Leu-50–Gln-57 are cytoplasmic. The helical transmembrane segment at Leu-58 to Ser-78 threads the bilayer. The Extracellular segment spans residues Ser-79–Ile-102. A disulfide bridge links Cys-100 with Cys-192. A helical membrane pass occupies residues Gln-103–Tyr-123. Residues Asp-124–Ser-136 are Cytoplasmic-facing. A helical transmembrane segment spans residues Asn-137–Leu-157. The Extracellular portion of the chain corresponds to Asn-158–Ala-199. A helical membrane pass occupies residues Val-200–Ser-220. Topologically, residues Tyr-221–Ala-240 are cytoplasmic. The chain crosses the membrane as a helical span at residues Phe-241 to Ile-261. Residues Tyr-262–Asn-274 are Extracellular-facing. A helical transmembrane segment spans residues Lys-275 to Leu-295. At Arg-296–Ser-314 the chain is on the cytoplasmic side.

It belongs to the G-protein coupled receptor 1 family.

It is found in the cell membrane. Its function is as follows. Potential odorant receptor. This chain is Olfactory receptor 5P76, found in Mus musculus (Mouse).